The sequence spans 173 residues: CKLF-like MARVEL transmembrane domain-containing protein 8 (173 aa).

In terms of domain architecture, MARVEL spans 36 to 168 (FLRTPPGLLI…NTYFSFIAWR (133 aa)). Transmembrane regions (helical) follow at residues 41–61 (PGLL…LIAG), 70–90 (FGWV…FLIV), 105–125 (TTVG…AAIV), and 147–167 (FFAF…FIAW).

The protein belongs to the chemokine-like factor family.

It is found in the membrane. In Mus musculus (Mouse), this protein is CKLF-like MARVEL transmembrane domain-containing protein 8 (Cmtm8).